A 214-amino-acid polypeptide reads, in one-letter code: Adenylate kinase (214 aa).

10 to 15 (GAGKGT) serves as a coordination point for ATP. An NMP region spans residues 30–59 (STGDMLRAAIKAGSELGNKAKAVMDAGQLV). Residues T31, R36, 57-59 (QLV), 85-88 (GFPR), and Q92 contribute to the AMP site. The LID stretch occupies residues 122–159 (GRRVHSGSGRVYHLVYNPPKVEGKDDVSGDDLSIRPDD). ATP-binding positions include R123 and 132–133 (VY). 2 residues coordinate AMP: R156 and R167. ATP is bound at residue Q200.

This sequence belongs to the adenylate kinase family. In terms of assembly, monomer.

Its subcellular location is the cytoplasm. The catalysed reaction is AMP + ATP = 2 ADP. Its pathway is purine metabolism; AMP biosynthesis via salvage pathway; AMP from ADP: step 1/1. Catalyzes the reversible transfer of the terminal phosphate group between ATP and AMP. Plays an important role in cellular energy homeostasis and in adenine nucleotide metabolism. The chain is Adenylate kinase from Colwellia psychrerythraea (strain 34H / ATCC BAA-681) (Vibrio psychroerythus).